Consider the following 305-residue polypeptide: Sulfate adenylyltransferase subunit 2 (305 aa).

The interval 283 to 305 (RQGRVIDHDQSASMEKKKQEGYF) is disordered.

This sequence belongs to the PAPS reductase family. CysD subfamily. Heterodimer composed of CysD, the smaller subunit, and CysN.

The catalysed reaction is sulfate + ATP + H(+) = adenosine 5'-phosphosulfate + diphosphate. It functions in the pathway sulfur metabolism; hydrogen sulfide biosynthesis; sulfite from sulfate: step 1/3. With CysN forms the ATP sulfurylase (ATPS) that catalyzes the adenylation of sulfate producing adenosine 5'-phosphosulfate (APS) and diphosphate, the first enzymatic step in sulfur assimilation pathway. APS synthesis involves the formation of a high-energy phosphoric-sulfuric acid anhydride bond driven by GTP hydrolysis by CysN coupled to ATP hydrolysis by CysD. This is Sulfate adenylyltransferase subunit 2 from Caulobacter sp. (strain K31).